Reading from the N-terminus, the 391-residue chain is Phosphoprotein (391 aa).

Residues threonine 10 and threonine 16 each carry the phosphothreonine modification. Residues 54-65 are compositionally biased toward polar residues; that stretch reads QKNIQHPTASHQ. Disordered stretches follow at residues 54 to 98 and 145 to 186; these read QKNI…EPLF and TSTP…RSGS. Residue serine 69 is modified to Phosphoserine. Phosphothreonine occurs at positions 91, 150, and 165. Serine 188 bears the Phosphoserine mark. A coiled-coil region spans residues 218 to 245; that stretch reads ANEIMDLLRGMDARLQHLEQKVDKVLAQ. Threonine 250 carries the phosphothreonine modification. Serine 257 bears the Phosphoserine mark. A phosphothreonine mark is found at threonine 258 and threonine 282. Phosphoserine is present on residues serine 292 and serine 294. At threonine 298 the chain carries Phosphothreonine. Residues serine 301 and serine 374 each carry the phosphoserine modification. The interaction with the nucleoprotein stretch occupies residues 343–391; it reads AGRKVMITKMITDCVANPQMKQAFEQRLAKASTEDALNDIKRDIIRNAI. At threonine 375 the chain carries Phosphothreonine.

Belongs to the rubulavirus/avulavirus P protein family. In terms of assembly, homotetramer. Interacts (via multimerization domain) with polymerase L; this interaction forms the polymerase L-P complex. Interacts (via N-terminus) with N0 (via Ncore); this interaction allows P to chaperon N0 to avoid N polymerization before encapsidation. Interacts (via C-terminus) with N-RNA template; this interaction positions the polymerase on the template for both transcription and replication. Interacts with host RPS6KB1 kinase; this interaction may play a role in the viral replication and transcription.

It is found in the virion. Essential cofactor of the RNA polymerase L that plays a central role in the transcription and replication by forming the polymerase complex with RNA polymerase L and recruiting L to the genomic N-RNA template for RNA synthesis. Also plays a central role in the encapsidation of nascent RNA chains by forming the encapsidation complex with the nucleocapsid protein N (N-P complex). Acts as a chaperone for newly synthesized free N protein, so-called N0, allowing encapsidation of nascent RNA chains during replication. The nucleoprotein protein N prevents excessive phosphorylation of P, which leads to down-regulation of viral transcription/ replication. Participates, together with N, in the formation of viral factories (viroplasms), which are large inclusions in the host cytoplasm where replication takes place. The sequence is that of Phosphoprotein from Mumps virus genotype N (strain L-Zagreb vaccine) (MuV).